The chain runs to 337 residues: Ribosomal RNA small subunit methyltransferase C (337 aa).

This sequence belongs to the methyltransferase superfamily. RsmC family. Monomer.

It is found in the cytoplasm. The catalysed reaction is guanosine(1207) in 16S rRNA + S-adenosyl-L-methionine = N(2)-methylguanosine(1207) in 16S rRNA + S-adenosyl-L-homocysteine + H(+). Specifically methylates the guanine in position 1207 of 16S rRNA in the 30S particle. The sequence is that of Ribosomal RNA small subunit methyltransferase C from Acinetobacter baumannii (strain ACICU).